The chain runs to 324 residues: Testisin (324 aa).

The N-terminal stretch at 1–21 is a signal peptide; the sequence is MGARGKTLVPLLVVVATAAMA. A propeptide spanning residues 22 to 54 is cleaved from the precursor; it reads LQSTYLQVDPEKPELQEPDLLSGPCGHRTIPSR. Disulfide bonds link Cys-46-Cys-167 and Cys-80-Cys-96. One can recognise a Peptidase S1 domain in the interval 55–296; sequence IVGGDDAELG…HYNWIQSTMI (242 aa). Residues His-95 and Asp-147 each act as charge relay system in the active site. N-linked (GlcNAc...) asparagine glycans are attached at residues Asn-170, Asn-177, and Asn-210. 3 disulfide bridges follow: Cys-181-Cys-254, Cys-214-Cys-233, and Cys-244-Cys-272. Ser-248 acts as the Charge relay system in catalysis. Asn-283 carries N-linked (GlcNAc...) asparagine glycosylation. Asn-298 is lipidated: GPI-anchor amidated asparagine. The propeptide at 299–324 is removed in mature form; sequence GLLRPDPVPLLLFLTLAWASSLLRPA.

It belongs to the peptidase S1 family. Testis.

The protein resides in the cell membrane. Could regulate proteolytic events associated with testicular germ cell maturation. This Mus musculus (Mouse) protein is Testisin (Prss21).